A 561-amino-acid polypeptide reads, in one-letter code: uncharacterized protein (561 aa).

6 helical membrane-spanning segments follow: residues 10-29 (LLRNNPEIALFLAIAIGYWI), 34-56 (FGSLQIGGVAGSLLAAVLISQIG), 63-80 (LKTVLFALFIYAVGFQSG), 95-117 (VLMAFVLAISGLFTVLAVARMFH), 122-144 (LAAGVAAGGLTQSAIIGTASSAL), and 164-186 (GYAVTYIFGSLAPIIICVNILPW). 2 consecutive RCK C-terminal domains span residues 205–287 (QGMA…LLGE) and 294–376 (HDMD…ELGS). A run of 5 helical transmembrane segments spans residues 386–403 (LVFHGVGLVVGLLIGLIV), 407–429 (GSIPLTLGSGGGALLSGLLFGWY), 442–464 (AASTLLVDFGLSGFVAVTGLQTG), 479–501 (FMLGVVVSIVPLIITMLFGRYVL), and 538–560 (SFAITYAIANVLLTLLGPLVVAF).

It belongs to the AAE transporter (TC 2.A.81) family.

Its subcellular location is the cell membrane. This is an uncharacterized protein from Zymomonas mobilis subsp. mobilis (strain ATCC 31821 / ZM4 / CP4).